Consider the following 509-residue polypeptide: Maturase K (509 aa).

The protein belongs to the intron maturase 2 family. MatK subfamily.

It localises to the plastid. The protein localises to the chloroplast. Usually encoded in the trnK tRNA gene intron. Probably assists in splicing its own and other chloroplast group II introns. This is Maturase K from Sequoia sempervirens (California redwood).